The chain runs to 350 residues: Aminomethyltransferase (350 aa).

The protein belongs to the GcvT family. In terms of assembly, the glycine cleavage system is composed of four proteins: P, T, L and H.

It carries out the reaction N(6)-[(R)-S(8)-aminomethyldihydrolipoyl]-L-lysyl-[protein] + (6S)-5,6,7,8-tetrahydrofolate = N(6)-[(R)-dihydrolipoyl]-L-lysyl-[protein] + (6R)-5,10-methylene-5,6,7,8-tetrahydrofolate + NH4(+). The glycine cleavage system catalyzes the degradation of glycine. The chain is Aminomethyltransferase from Aquifex aeolicus (strain VF5).